Consider the following 378-residue polypeptide: Erythronate-4-phosphate dehydrogenase (378 aa).

Residues Ser45 and Thr66 each contribute to the substrate site. NAD(+) is bound by residues Asp146 and Thr175. Residue Arg208 is part of the active site. NAD(+) is bound at residue Asp232. Glu237 is an active-site residue. His254 acts as the Proton donor in catalysis. Gly257 lines the NAD(+) pocket. Tyr258 lines the substrate pocket.

The protein belongs to the D-isomer specific 2-hydroxyacid dehydrogenase family. PdxB subfamily. Homodimer.

The protein localises to the cytoplasm. The catalysed reaction is 4-phospho-D-erythronate + NAD(+) = (R)-3-hydroxy-2-oxo-4-phosphooxybutanoate + NADH + H(+). Its pathway is cofactor biosynthesis; pyridoxine 5'-phosphate biosynthesis; pyridoxine 5'-phosphate from D-erythrose 4-phosphate: step 2/5. Catalyzes the oxidation of erythronate-4-phosphate to 3-hydroxy-2-oxo-4-phosphonooxybutanoate. This Escherichia coli O6:K15:H31 (strain 536 / UPEC) protein is Erythronate-4-phosphate dehydrogenase.